The chain runs to 510 residues: GMP synthase [glutamine-hydrolyzing] (510 aa).

Positions 5–194 (DILVLDFGSQ…FAKICGCEST (190 aa)) constitute a Glutamine amidotransferase type-1 domain. Catalysis depends on Cys-82, which acts as the Nucleophile. Residues His-169 and Glu-171 contribute to the active site. The GMPS ATP-PPase domain occupies 195–385 (WNMGSFAKKE…LGLSRDIVYR (191 aa)). 222–228 (SGGVDSS) serves as a coordination point for ATP.

As to quaternary structure, homodimer.

The catalysed reaction is XMP + L-glutamine + ATP + H2O = GMP + L-glutamate + AMP + diphosphate + 2 H(+). Its pathway is purine metabolism; GMP biosynthesis; GMP from XMP (L-Gln route): step 1/1. Its function is as follows. Catalyzes the synthesis of GMP from XMP. This chain is GMP synthase [glutamine-hydrolyzing], found in Campylobacter fetus subsp. fetus (strain 82-40).